Here is a 346-residue protein sequence, read N- to C-terminus: Putative D-alanine--D-lactate ligase (346 aa).

The ATP-grasp domain maps to 137-338; it reads YVVARSAGIA…LSEVIDRTLS (202 aa). 163-216 lines the ATP pocket; it reads RLTYPVFVKPARSGSSFGVSKVCRPEDLATAVESARRYDTKVLIEAAVVGSEVG. Mg(2+)-binding residues include D292, E305, and N307.

Belongs to the D-alanine--D-alanine ligase family. It depends on Mg(2+) as a cofactor. Mn(2+) is required as a cofactor.

It localises to the cell membrane. Required for resistance to glycopeptides antibiotics. D-Ala--D-Ala ligase of altered specificity which catalyzes ester bond formation between D-Ala and various D-hydroxy acids; producing a peptidoglycan which does not terminate by D-alanine but by D-lactate, thus preventing vancomycin binding. The protein is Putative D-alanine--D-lactate ligase of Streptomyces coelicolor (strain ATCC BAA-471 / A3(2) / M145).